The primary structure comprises 261 residues: Undecaprenyl-diphosphatase (261 aa).

The next 8 membrane-spanning stretches (helical) occupy residues 1 to 21 (MNYIQAIILAIIEGITEFLPV), 41 to 61 (FTKLFTIVIQLGAILSVVVLY), 69 to 89 (LDFYFKLLVAFIPAVVLGLLF), 95 to 115 (ALLESPVTVAVSLLVGGIILL), 129 to 149 (ITYLKAFKIGLFQCIAMIPGV), 169 to 186 (AAEFSFFLAVPTMLGATL), 206 to 226 (ILIIGNIVAFLVALLAIKTFI), and 241 to 261 (RIVAGIVLLLIHFFIHPLTLI).

This sequence belongs to the UppP family.

The protein localises to the cell inner membrane. It catalyses the reaction di-trans,octa-cis-undecaprenyl diphosphate + H2O = di-trans,octa-cis-undecaprenyl phosphate + phosphate + H(+). Catalyzes the dephosphorylation of undecaprenyl diphosphate (UPP). Confers resistance to bacitracin. This chain is Undecaprenyl-diphosphatase, found in Flavobacterium psychrophilum (strain ATCC 49511 / DSM 21280 / CIP 103535 / JIP02/86).